Consider the following 543-residue polypeptide: Terpineol synthase, chloroplastic (543 aa).

Residues 1-22 (MNTEPSPNHYSAISSSDQNLTR) form a disordered region. Arg263, Asp300, Asp304, Arg435, and Asn438 together coordinate (2E)-geranyl diphosphate. Residues Asp300 and Asp304 each coordinate Mg(2+). The short motif at 300 to 304 (DDVYD) is the DDXXD motif element. The Mg(2+) site is built by Asn438, Thr442, and Glu446.

The protein belongs to the terpene synthase family. Tpsb subfamily. In terms of assembly, monomer. The cofactor is Mg(2+). Mn(2+) is required as a cofactor. As to expression, confined to flowers.

The protein resides in the plastid. It localises to the chloroplast. It carries out the reaction (2E)-geranyl diphosphate + H2O = (S)-alpha-terpineol + diphosphate. The enzyme catalyses (2E)-geranyl diphosphate = sabinene + diphosphate. The catalysed reaction is (2E)-geranyl diphosphate = beta-myrcene + diphosphate. It catalyses the reaction (2E)-geranyl diphosphate = limonene + diphosphate. It carries out the reaction (2E)-geranyl diphosphate + H2O = 1,8-cineole + diphosphate. The protein operates within secondary metabolite biosynthesis; terpenoid biosynthesis. Functionally, monoterpene synthase (TPS) involved in the biosynthesis of monoterpene natural products of the 'cineole cassette', volatile compounds present in floral scent. Catalyzes the conversion of (2E)-geranyl diphosphate (GPP) into alpha-terpineol and, as minor products, sabinene, beta-myrcene, limonene and 1,8-cineole. The protein is Terpineol synthase, chloroplastic of Nicotiana alata (Winged tobacco).